Here is a 491-residue protein sequence, read N- to C-terminus: Angiopoietin-related protein 1 (491 aa).

Residues 1-23 (MKAFIWTLSVLFFLLMGIGHGRG) form the signal peptide. Residues 80–168 (ITRMDLENLK…LNVTTEMLKM (89 aa)) adopt a coiled-coil conformation. Asn160 and Asn188 each carry an N-linked (GlcNAc...) asparagine glycan. Positions 271 to 491 (FINEGPYKDC…AVQMLIKPID (221 aa)) constitute a Fibrinogen C-terminal domain. Intrachain disulfides connect Cys280/Cys309 and Cys432/Cys445.

The protein localises to the secreted. The polypeptide is Angiopoietin-related protein 1 (ANGPTL1) (Bos taurus (Bovine)).